The following is a 62-amino-acid chain: uncharacterized protein (62 aa).

This is an uncharacterized protein from His1 virus (isolate Australia/Victoria) (His1V).